A 1071-amino-acid polypeptide reads, in one-letter code: Ubiquitin carboxyl-terminal hydrolase 7 (1071 aa).

Positions 467–532 are disordered; sequence KARLQQEQQQ…MPTTPEIPPP (66 aa). The span at 471 to 480 shows a compositional bias: low complexity; it reads QQEQQQQQQQ. The span at 481–495 shows a compositional bias: polar residues; that stretch reads PDSQDSFSAKESSTK. Composition is skewed to pro residues over residues 497–507 and 516–532; these read PEPPSWKPPDL and PPPPPVSMPTTPEIPPP. A USP domain is found at 609–1069; that stretch reads TGLRNLGNTC…DVYVLFYERV (461 aa). Cys-618 functions as the Nucleophile in the catalytic mechanism. Residues 913–942 form a disordered region; that stretch reads RMLGGSGKRSSSSTPFSTGGNDSNNSSDYK. The segment covering 920-932 has biased composition (polar residues); that stretch reads KRSSSSTPFSTGG. The Proton acceptor role is filled by His-1014.

This sequence belongs to the peptidase C19 family.

The protein resides in the cytoplasm. The enzyme catalyses Thiol-dependent hydrolysis of ester, thioester, amide, peptide and isopeptide bonds formed by the C-terminal Gly of ubiquitin (a 76-residue protein attached to proteins as an intracellular targeting signal).. Involved in the sorting of ubiquitinated cargo proteins at the multivesicular body (MVB). The sequence is that of Ubiquitin carboxyl-terminal hydrolase 7 (UBP7) from Saccharomyces cerevisiae (strain ATCC 204508 / S288c) (Baker's yeast).